A 305-amino-acid chain; its full sequence is PI-PLC X domain-containing protein 2 (305 aa).

One can recognise a PI-PLC X-box domain in the interval 42-215; the sequence is HLHNLPLSNL…NCQVLIFYHC (174 aa). Active-site residues include His-57 and His-132.

In terms of tissue distribution, widely expressed.

The protein resides in the nucleus. The catalysed reaction is a 1,2-diacyl-sn-glycero-3-phospho-(1D-myo-inositol) + H2O = 1D-myo-inositol 1-phosphate + a 1,2-diacyl-sn-glycerol + H(+). Its function is as follows. Catalyzes the hydrolysis of inositol from phosphatidylinositol (1,2-diacyl-sn-glycero-3-phospho-(1D-myo-inositol), PI). Could also hydrolyze various multi-phosphorylated derivatives of PI, such as phosphatidylinositol-4,5 bisphosphate (PIP2), releasing inositol-1,4,5-trisphosphate (IP3) and the protein kinase C activator diacylglycerol (DAG), therefore mediating cell signaling. This chain is PI-PLC X domain-containing protein 2 (PLCXD2), found in Homo sapiens (Human).